A 210-amino-acid polypeptide reads, in one-letter code: Ribosomal RNA small subunit methyltransferase G (210 aa).

S-adenosyl-L-methionine contacts are provided by residues glycine 77, phenylalanine 82, 100–102 (ERS), 128–129 (VE), and arginine 141.

Belongs to the methyltransferase superfamily. RNA methyltransferase RsmG family.

The protein localises to the cytoplasm. In terms of biological role, specifically methylates the N7 position of a guanine in 16S rRNA. This is Ribosomal RNA small subunit methyltransferase G from Borrelia recurrentis (strain A1).